The primary structure comprises 220 residues: Acetate CoA-transferase subunit alpha (220 aa).

24–30 (GGFMGIG) serves as a coordination point for CoA.

It belongs to the 3-oxoacid CoA-transferase subunit A family. Heterotetramer composed of two alpha subunits (AtoD) and two beta subunits (AtoA).

Its subcellular location is the cytoplasm. The enzyme catalyses an acyl-CoA + acetate = a carboxylate + acetyl-CoA. The catalysed reaction is acetoacetate + acetyl-CoA = acetoacetyl-CoA + acetate. It catalyses the reaction butanoate + acetyl-CoA = butanoyl-CoA + acetate. It carries out the reaction acetoacetate + butanoyl-CoA = acetoacetyl-CoA + butanoate. Its pathway is lipid metabolism; short-chain fatty acid metabolism. Its activity is regulated as follows. Inhibited by p-chloromercuribenzoate. In terms of biological role, coenzyme A transferase which is involved in short-chain fatty acid degradation and catalyzes the activation of short-chain fatty acids to their respective CoA thiolesters. During acetoacetate degradation, catalyzes the transfer of CoA from acetyl-CoA to acetoacetate by a mechanism involving a covalent enzyme-CoA compound as a reaction intermediate. Utilizes a variety of short chain acyl-CoA and carboxylic acid substrates but exhibits maximal activity with normal and 3-keto substrates. This Escherichia coli (strain K12) protein is Acetate CoA-transferase subunit alpha.